A 471-amino-acid chain; its full sequence is Ammonium transporter Rh type B (471 aa).

Residues 1–13 (MAGSPSRAAGRRL) are Cytoplasmic-facing. The chain crosses the membrane as a helical span at residues 14–33 (QLPLLSFLQGATAVLFAVFV). The Extracellular segment spans residues 34 to 60 (RYNHKTDAALWHRGNHSNADNEFYFRY). An N-linked (GlcNAc...) asparagine glycan is attached at N48. A helical transmembrane segment spans residues 61–81 (PSFQDVHAMVFVGFGFLMVFL). The Cytoplasmic segment spans residues 82–85 (QRYG). The chain crosses the membrane as a helical span at residues 86–106 (FSSVGFTFLLAAFALQWSTLV). Topologically, residues 107–123 (QGFLHSFHGGHIHVGVE) are extracellular. A helical membrane pass occupies residues 124–144 (SMINADFCAGAVLISFGAVLG). Residues 145 to 148 (KTGP) are Cytoplasmic-facing. A helical membrane pass occupies residues 149 to 169 (AQLLLMALLEVVLFGINEFVL). The Extracellular segment spans residues 170–177 (LHLLGVRD). Residues 178-200 (AGGSMTIHTFGAYFGLVLSQVLY) form a helical membrane-spanning segment. Residues 201–217 (RPQLEKSKHRQGLYHSD) are Cytoplasmic-facing. The helical transmembrane segment at 218–238 (LFAMIGTIFLWIFWPSFNAAL) threads the bilayer. The Extracellular portion of the chain corresponds to 239-249 (TSLGAGQHRTA). Residues 250-270 (LNTYYSLAASTLGTFALSALV) traverse the membrane as a helical segment. Residues 271 to 280 (GEDGRLDMVH) are Cytoplasmic-facing. A helical transmembrane segment spans residues 281–301 (IQNAALAGRVVVGTSSEMMLT). Position 302 (P302) is a topological domain, extracellular. The helical transmembrane segment at 303–323 (FGALAAGFLAGTVSTLGYKFF) threads the bilayer. Residues 324-344 (TPILESKFKVQDTCGVHNLHG) are Cytoplasmic-facing. A helical transmembrane segment spans residues 345 to 365 (MPGVLGVLLGVLVAGLATHEA). At 366–391 (YGDGLESVFPLIAEGQRSATSQAMYQ) the chain is on the extracellular side. A helical membrane pass occupies residues 392-412 (LFGLFVTLMFASVGGGLGGLL). The Cytoplasmic segment spans residues 413 to 471 (LKLPFLDSPPDSQCYEDQVHWQAPGATLSPLPTPAFQVPGEHEDKAQRPLRVEEADTQA). An interaction with ANK3 region spans residues 414-422 (KLPFLDSPP). The Basolateral sorting signal motif lies at 427 to 430 (YEDQ). Positions 437–471 (GATLSPLPTPAFQVPGEHEDKAQRPLRVEEADTQA) are disordered. Basic and acidic residues predominate over residues 452–471 (GEHEDKAQRPLRVEEADTQA).

Belongs to the ammonium transporter (TC 2.A.49) family. Rh subfamily. In terms of assembly, interacts (via C-terminus) with ANK2 and ANK3; required for targeting to the basolateral membrane. N-glycosylated.

The protein resides in the cell membrane. The protein localises to the basolateral cell membrane. It carries out the reaction NH4(+)(in) = NH4(+)(out). The catalysed reaction is methylamine(out) = methylamine(in). It catalyses the reaction CO2(out) = CO2(in). Functionally, ammonium transporter involved in the maintenance of acid-base homeostasis. Transports ammonium and its related derivative methylammonium across the basolateral plasma membrane of epithelial cells likely contributing to renal transepithelial ammonia transport and ammonia metabolism. May transport either NH4(+) or NH3 ammonia species predominantly mediating an electrogenic NH4(+) transport. May act as a CO2 channel providing for renal acid secretion. This chain is Ammonium transporter Rh type B (RHBG), found in Pongo pygmaeus (Bornean orangutan).